The chain runs to 242 residues: Polycomb group RING finger protein 3 (242 aa).

The segment at 17 to 56 adopts an RING-type zinc-finger fold; sequence CRLCSGYLIDATTVTECLHTFCRSCLVKYLEENNTCPTCR. The disordered stretch occupies residues 115–149; that stretch reads AKQHLDPHRNGETKADDSSNKEAAEEKQEEDGDYH. The segment covering 117–140 has biased composition (basic and acidic residues); that stretch reads QHLDPHRNGETKADDSSNKEAAEE. The segment at 132 to 242 is interaction with BCORL1; sequence SSNKEAAEEK…LHYRPKMDLL (111 aa).

As to quaternary structure, component of a PRC1-like complex that contains PCGF3, RNF2 and RYBP. Interacts with CBX6, CBX7 and CBX8. Interacts with BCORL1.

The protein resides in the nucleus. It is found in the nucleoplasm. Functionally, component of a Polycomb group (PcG) multiprotein PRC1-like complex, a complex class required to maintain the transcriptionally repressive state of many genes, including Hox genes, throughout development. PcG PRC1 complex acts via chromatin remodeling and modification of histones; it mediates monoubiquitination of histone H2A 'Lys-119', rendering chromatin heritably changed in its expressibility. Within the PRC1-like complex, regulates RNF2 ubiquitin ligase activity. Plays a redundant role with PCGF5 as part of a PRC1-like complex that mediates monoubiquitination of histone H2A 'Lys-119' on the X chromosome and is required for normal silencing of one copy of the X chromosome in XX females. The polypeptide is Polycomb group RING finger protein 3 (PCGF3) (Bos taurus (Bovine)).